Here is a 493-residue protein sequence, read N- to C-terminus: MLQTVFLTMLTLALVKSQVTEETITYTQCTDGYEWDPVRQQCKDIDECDIVPDACKGGMKCVNHYGGYLCLPKTAQIIVNNEQPQQETPAAEASSGAATGTIAARSMATSGVIPGGGFIASATAVAGPEVQTGRNNFVIRRNPADPQRIPSNPSHRIQCAAGYEQSEHNVCQDIDECTSGTHNCRLDQVCINLRGSFTCHCLPGYQKRGEQCVDIDECSVPPYCHQGCVNTPGSFYCQCNPGFQLAANNYTCVDINECDASNQCAQQCYNILGSFICQCNQGYELSSDRLNCEDIDECRTSSYLCQYQCVNEPGKFSCMCPQGYQVVRSRTCQDINECETTNECREDEMCWNYHGGFRCYPQNPCQDPYVLTSENRCVCPVSNTMCRDVPQSIVYKYMNIRSDRSVPSDIFQIQATTIYANTINTFRIKSGNENGEFYLRQTSPVSAMLVLVKSLTGPREHIVGLEMLTVSSIGTFRTSSVLRLTIIVGPFSF.

The N-terminal stretch at 1 to 17 is a signal peptide; that stretch reads MLQTVFLTMLTLALVKS. The 46-residue stretch at 26–71 folds into the EGF-like 1; atypical domain; it reads YTQCTDGYEWDPVRQQCKDIDECDIVPDACKGGMKCVNHYGGYLCL. In terms of domain architecture, EGF-like 2; calcium-binding spans 173–213; sequence DIDECTSGTHNCRLDQVCINLRGSFTCHCLPGYQKRGEQCV. 15 cysteine pairs are disulfide-bonded: C177–C190, C184–C199, C201–C212, C218–C228, C224–C237, C239–C252, C258–C268, C264–C277, C279–C292, C298–C309, C305–C318, C320–C332, C338–C350, C344–C359, and C365–C377. The region spanning 214–253 is the EGF-like 3; calcium-binding domain; sequence DIDECSVPPYCHQGCVNTPGSFYCQCNPGFQLAANNYTCV. N-linked (GlcNAc...) asparagine glycosylation occurs at N249. Positions 254-293 constitute an EGF-like 4; calcium-binding domain; sequence DINECDASNQCAQQCYNILGSFICQCNQGYELSSDRLNCE. The interval 259 to 493 is mediates interaction with TIMP3; that stretch reads DASNQCAQQC…LTIIVGPFSF (235 aa). The region spanning 294–333 is the EGF-like 5; calcium-binding domain; the sequence is DIDECRTSSYLCQYQCVNEPGKFSCMCPQGYQVVRSRTCQ. Residues 334–378 enclose the EGF-like 6; calcium-binding domain; it reads DINECETTNECREDEMCWNYHGGFRCYPQNPCQDPYVLTSENRCV.

The protein belongs to the fibulin family. In terms of assembly, interacts with ECM1. Interacts with TIMP3. Expressed by olfactory ensheathing cells (at protein level). Detected in lung, intestine and kidney.

The protein localises to the secreted. It is found in the extracellular space. The protein resides in the extracellular matrix. Binds EGFR, the EGF receptor, inducing EGFR autophosphorylation and the activation of downstream signaling pathways. May play a role in cell adhesion and migration. May function as a negative regulator of chondrocyte differentiation. In the olfactory epithelium, it may regulate glial cell migration, differentiation and the ability of glial cells to support neuronal neurite outgrowth. This Rattus norvegicus (Rat) protein is EGF-containing fibulin-like extracellular matrix protein 1 (Efemp1).